Reading from the N-terminus, the 1346-residue chain is MGYSYTEKKRIRKDFGKRPQVMEKPYLLSIQLDSFKRFIEVDLTGEVGLEAAFNSIFPIASYSGTSELQYVSYRLGEPVFDVKECQIRGVTYSASLRVKLRLVIYDRDAPAGTVKDIREQEVYMGEMPLMTENGTFVINGTERVIVSQLHRSPGVFFDHDKGKTHSSGKVLYNARVIPYRGSWLDFEFDPKDNLFVRIDRRRKLPATIMLRALEYSTQEILAIFYDTTKFDIKDGVISMSLIADRLRGEMALFDIAANGKIYVEQGKRITARHIKQLEKDNINTLDVPVEYIAEKDLVVAKDYISKETGEIIVSANDILTLEILAELTQSGITSFDIIYTNELDCGSFISDTLRVDSSSNRLEALVEIYRMMRPGEPPTKDAAEGLFHNLFFAEERYELSKVGRMKFNRRVGIDGDEGAGILSKDDILSVMKTLIAIRNGDGIVDDIDHLGNRRIRCVGEMAENQFRVGLVRVERAVRERLSLGDLDATMPQDLINAKPISAAVKEFFGSSQLSQFMDQNNPLSEVTHKRRISALGPGGLTRERAGFEVRDVHPTHYGRLCPIETPEGPNIGLINSLATFSRTNSYGFLETPYRKVENGKPTDQVEYLSAIEEGSFVIAQASASIDENGLLDEELIPCRHKGESTFLSPADIDYMDVSPQQIISVAASLIPFLEHDDANRALMGSNMQRQAVPTLRADKPLVGTGIERRLAIDSGVTIIAKRSGVIDYVDASRIVVKVDDNELLPGEAGIDIYNLTKYTRSNQNTCINQKPTCEPGEPIVRGDVLADGPSTDMGDLALGQNMKIAFMPWNGYNFEDSILISERVSQEDRFTTIHIQEFSCVARETKLGSEEISADIPNVGEAALSKLDESGIVYVGAEVKPGDILVGKVTPKGETQLTPEEKLLRAIFGEKASDVKDSSLRVAASTYATVIDVQVFTRDGVEKDKRALEIEEMQLKAAKKDLTEKFKILENAIYEKALAILVGAGQDEARLLQMPRAQWLEVQIDDETKQSYLDQIITQYDEVKADYDKEFDIKRRKITQGDDLAPGVQKIVKVYLAVRRRLQPGDKMAGRHGNKGVISNIVPVEDMPHDEFGVPVDIVLNPLGVPSRMNIGQVLETHLGLAAKGVGEKLERMIKYQRDIEITKVREFVQKLYSFGDAPCHVDLNDFDDEAVMRLAKNLYKGLPVATPAFDGANEGEIRELLRMADLPESGQLQLTDGRTGIQFERPVTVGYMYMLKLNHLVDDKMHARSTGSYSLVTQQPLGGKAQFGGQRFGEMEVWALEAYGAAYTLQEMLTVKSDDVNGRTKMYKNIVDGDHRMEPGMPESFNVLLKEIRSLSINIELDESN.

This sequence belongs to the RNA polymerase beta chain family. The RNAP catalytic core consists of 2 alpha, 1 beta, 1 beta' and 1 omega subunit. When a sigma factor is associated with the core the holoenzyme is formed, which can initiate transcription.

The enzyme catalyses RNA(n) + a ribonucleoside 5'-triphosphate = RNA(n+1) + diphosphate. Functionally, DNA-dependent RNA polymerase catalyzes the transcription of DNA into RNA using the four ribonucleoside triphosphates as substrates. The chain is DNA-directed RNA polymerase subunit beta from Psychromonas ingrahamii (strain DSM 17664 / CCUG 51855 / 37).